The following is a 98-amino-acid chain: Thrombin-like enzyme cerastotin (98 aa).

In terms of domain architecture, Peptidase S1 spans 1-98 (VIGGAECNIN…IKKPVNGSTH (98 aa)). Active-site charge relay system residues include His41 and Asp85. An N-linked (GlcNAc...) asparagine glycan is attached at Asn94.

Belongs to the peptidase S1 family. Snake venom subfamily. Monomer. In terms of tissue distribution, expressed by the venom gland.

It localises to the secreted. With respect to regulation, inhibited by PMSF. Thrombin-like snake venom serine protease that preferentially cleaves the alpha-chain of fibrinogen (FGA). Induce platelet aggregation in the presence of exogenous fibrinogen. Possesses esterase and amidolytic activities. In Cerastes cerastes (Horned desert viper), this protein is Thrombin-like enzyme cerastotin.